The following is a 363-amino-acid chain: Aminomethyltransferase (363 aa).

Belongs to the GcvT family. The glycine cleavage system is composed of four proteins: P, T, L and H.

The enzyme catalyses N(6)-[(R)-S(8)-aminomethyldihydrolipoyl]-L-lysyl-[protein] + (6S)-5,6,7,8-tetrahydrofolate = N(6)-[(R)-dihydrolipoyl]-L-lysyl-[protein] + (6R)-5,10-methylene-5,6,7,8-tetrahydrofolate + NH4(+). Its function is as follows. The glycine cleavage system catalyzes the degradation of glycine. In Picosynechococcus sp. (strain ATCC 27264 / PCC 7002 / PR-6) (Agmenellum quadruplicatum), this protein is Aminomethyltransferase.